A 457-amino-acid chain; its full sequence is Solute carrier family 38 member 6 (457 aa).

Met1 is subject to N-acetylmethionine. Residues Ser4 and Ser7 each carry the phosphoserine modification. 5 helical membrane-spanning segments follow: residues 48-68 (FGLSVFNVMNAIMGSGILGLA), 70-90 (VMANTGILGFSFLLLLVALLA), 112-132 (LGLFAFGLPGKVVVAGTIIIQ), 171-191 (LLIIICVGIVFPLSLLPKIGF), and 192-212 (LGYTSSLSFFFMVFFALVVVI). Cys219 and Cys239 are joined by a disulfide. N-linked (GlcNAc...) asparagine glycosylation occurs at Asn234. The chain crosses the membrane as a helical span at residues 251 to 271 (VYAIPTMAFSFLCHTSVLPIY). N-linked (GlcNAc...) asparagine glycosylation is present at Asn284. Helical transmembrane passes span 289-309 (AIALSFLVYFVSALFGYLTFY), 328-348 (AAVMAVKLCILFAVLLTVPLI), 372-392 (SLTTLALNIIIVLLAIYVPDI), 395-415 (VFGVVGASTSTCLIFVFPGLF), and 432-452 (ALSLLSTGTVVGSFSLVLIIL).

It belongs to the amino acid/polyamine transporter 2 family.

The protein localises to the cell membrane. It is found in the synapse. The enzyme catalyses L-glutamine(out) = L-glutamine(in). It carries out the reaction L-glutamate(out) = L-glutamate(in). Amino acid transporter with an apparent selectivity for L-glutamine and L-glutamate. May facilitate glutamine uptake in excitatory neurons. The transport mechanism remains to be elucidated. This chain is Solute carrier family 38 member 6, found in Rattus norvegicus (Rat).